A 350-amino-acid polypeptide reads, in one-letter code: tRNA dimethylallyltransferase (350 aa).

Positions 1–20 (MMNTERPAGPLRPPHPPHPP) are disordered. A compositionally biased stretch (pro residues) spans 10 to 20 (PLRPPHPPHPP). 27-34 (GPTASGKT) lines the ATP pocket. 29 to 34 (TASGKT) lines the substrate pocket. 3 interaction with substrate tRNA regions span residues 52 to 55 (DSAL), 176 to 180 (QRIAR), and 273 to 278 (RCVGYR).

The protein belongs to the IPP transferase family. In terms of assembly, monomer. Mg(2+) is required as a cofactor.

The enzyme catalyses adenosine(37) in tRNA + dimethylallyl diphosphate = N(6)-dimethylallyladenosine(37) in tRNA + diphosphate. Its function is as follows. Catalyzes the transfer of a dimethylallyl group onto the adenine at position 37 in tRNAs that read codons beginning with uridine, leading to the formation of N6-(dimethylallyl)adenosine (i(6)A). The polypeptide is tRNA dimethylallyltransferase (Albidiferax ferrireducens (strain ATCC BAA-621 / DSM 15236 / T118) (Rhodoferax ferrireducens)).